The primary structure comprises 151 residues: MTHPVIPDILALAQPIAEDLGLEVTDAVFQTNKRPPVLRIDIRNLQQDTSLNDCEAFSRSFEAQLEESSLIASAYVLEVSSPGISPYLATERDFIAFKGFEVVVTSDNPHQGQSQWQGSLQGRDGEAVYLSIRGRTVAIPLTVGLTVRLPH.

Belongs to the RimP family.

Its subcellular location is the cytoplasm. Required for maturation of 30S ribosomal subunits. This chain is Ribosome maturation factor RimP, found in Synechocystis sp. (strain ATCC 27184 / PCC 6803 / Kazusa).